Here is a 98-residue protein sequence, read N- to C-terminus: Transcription elongation factor A protein-like 7 (98 aa).

Basic and acidic residues predominate over residues 1–22; it reads MQKSCNEKEGKPKGSEAKREDE. Positions 1-33 are disordered; the sequence is MQKSCNEKEGKPKGSEAKREDEQPCGALEGQRL. Residues 59–89 adopt a coiled-coil conformation; it reads GEEMTGEEEEMERCLEEIRSLRKKFRALHSN.

This sequence belongs to the TFS-II family. TFA subfamily.

Its subcellular location is the nucleus. Plays a role in the negative regulation of NF-kappa-B signaling at the basal level by modulating transcriptional activity of NF-kappa-B on its target gene promoters. Associates with cyclin D1 promoter containing Myc E-box sequence and transcriptionally represses cyclin D1 expression. Regulates telomerase reverse transcriptase expression and telomerase activity in both ALT (alternative lengthening of telomeres)and telomerase-positive cell lines. The protein is Transcription elongation factor A protein-like 7 (Tceal7) of Mus musculus (Mouse).